A 228-amino-acid chain; its full sequence is uncharacterized protein (228 aa).

The next 5 membrane-spanning stretches (helical) occupy residues 14–34 (HTISIFLGYLLMGMTFGMLLA), 42–62 (VALFMSLFIYAGAIQFVAITL), 130–150 (FMFSISLLNHSYWIFGSLVGS), 156–176 (FSFDTQGMEFVMTAIFIVLFM), and 192–212 (IAIAVVCLALFGTEYFLLIAL).

It belongs to the AzlC family.

Its subcellular location is the cell membrane. This is an uncharacterized protein from Helicobacter pylori (strain J99 / ATCC 700824) (Campylobacter pylori J99).